Consider the following 392-residue polypeptide: ATP phosphoribosyltransferase regulatory subunit (392 aa).

It belongs to the class-II aminoacyl-tRNA synthetase family. HisZ subfamily. As to quaternary structure, heteromultimer composed of HisG and HisZ subunits.

The protein resides in the cytoplasm. The protein operates within amino-acid biosynthesis; L-histidine biosynthesis; L-histidine from 5-phospho-alpha-D-ribose 1-diphosphate: step 1/9. Functionally, required for the first step of histidine biosynthesis. May allow the feedback regulation of ATP phosphoribosyltransferase activity by histidine. The chain is ATP phosphoribosyltransferase regulatory subunit from Prochlorococcus marinus (strain MIT 9313).